The sequence spans 745 residues: Junction plakoglobin (745 aa).

Met-1 is modified (N-acetylmethionine). Thr-14 carries O-linked (GlcNAc) threonine glycosylation. 2 positions are modified to phosphoserine: Ser-99 and Ser-125. ARM repeat units follow at residues 132 to 171 (NYQD…QLSK), 172 to 215 (KEAS…LSHH), 216 to 255 (REGL…NLLL), 258 to 297 (EGAK…LLAY), 298 to 341 (GNQE…LSVC), 342 to 381 (PSNK…NLSD), 383 to 420 (ATKQ…NLTC), 423 to 464 (SKNK…HLTS), 470 to 510 (EMAQ…NLAL), 512 to 551 (PANH…QPYT), 574 to 613 (PMNR…ELAQ), and 615 to 661 (KEAA…PDYR). The segment at 132–297 (NYQDDAELAT…TTDCLQLLAY (166 aa)) is interaction with DSC1 and DSG1. Ser-182 bears the Phosphoserine mark. The interaction with DSC1 stretch occupies residues 574 to 661 (PMNRMEIFRL…ISEDKNPDYR (88 aa)). Ser-665 and Ser-730 each carry phosphoserine.

This sequence belongs to the beta-catenin family. In terms of assembly, homodimer. Component of an E-cadherin/catenin adhesion complex composed of at least E-cadherin/CDH1 and gamma-catenin/JUP, and possibly alpha-catenin/CTNNA1; the complex is located to adherens junctions. The stable association of CTNNA1 is controversial as CTNNA1 was shown not to bind to F-actin when assembled in the complex. Interacts with MUC1. Interacts with CAV1. Interacts with PTPRJ. Interacts with DSG1. Interacts with DSC1 and DSC2. Interacts with PKP2. Interacts with PKP3 (via N-terminus); the interaction is required for PKP3 localization to desmosome cell-cell junctions. Interacts with DSG4. May be phosphorylated by FER.

Its subcellular location is the cell junction. It localises to the adherens junction. It is found in the desmosome. The protein localises to the cytoplasm. The protein resides in the cytoskeleton. Its subcellular location is the cell membrane. It localises to the nucleus. Common junctional plaque protein. The membrane-associated plaques are architectural elements in an important strategic position to influence the arrangement and function of both the cytoskeleton and the cells within the tissue. The presence of plakoglobin in both the desmosomes and in the intermediate junctions suggests that it plays a central role in the structure and function of submembranous plaques. Acts as a substrate for VE-PTP and is required by it to stimulate VE-cadherin function in endothelial cells. Can replace beta-catenin in E-cadherin/catenin adhesion complexes which are proposed to couple cadherins to the actin cytoskeleton. This chain is Junction plakoglobin, found in Bos taurus (Bovine).